We begin with the raw amino-acid sequence, 248 residues long: Ribosomal RNA small subunit methyltransferase G (248 aa).

Residues 1-23 (MFHVKHVGPVEPAAGDPEVPPVA) are disordered. S-adenosyl-L-methionine-binding positions include glycine 93, leucine 98, 143 to 144 (AE), and arginine 161. Positions 226-248 (VVSARRAKPPHPKSARTGKAGTR) are disordered. Residues 230–248 (RRAKPPHPKSARTGKAGTR) are compositionally biased toward basic residues.

This sequence belongs to the methyltransferase superfamily. RNA methyltransferase RsmG family.

The protein resides in the cytoplasm. Its function is as follows. Specifically methylates the N7 position of guanine in position 518 of 16S rRNA. The polypeptide is Ribosomal RNA small subunit methyltransferase G (Mycolicibacterium paratuberculosis (strain ATCC BAA-968 / K-10) (Mycobacterium paratuberculosis)).